Consider the following 232-residue polypeptide: Endonuclease V (232 aa).

D43 and D109 together coordinate Mg(2+).

The protein belongs to the endonuclease V family. Requires Mg(2+) as cofactor.

Its subcellular location is the cytoplasm. It carries out the reaction Endonucleolytic cleavage at apurinic or apyrimidinic sites to products with a 5'-phosphate.. In terms of biological role, DNA repair enzyme involved in the repair of deaminated bases. Selectively cleaves double-stranded DNA at the second phosphodiester bond 3' to a deoxyinosine leaving behind the intact lesion on the nicked DNA. This is Endonuclease V from Thermofilum pendens (strain DSM 2475 / Hrk 5).